The following is a 327-amino-acid chain: GMP reductase (327 aa).

Cys176 serves as the catalytic Thioimidate intermediate. 205-228 (IIADGGIRTHGDIAKSIRFGASMV) is an NADP(+) binding site.

The protein belongs to the IMPDH/GMPR family. GuaC type 2 subfamily.

The enzyme catalyses IMP + NH4(+) + NADP(+) = GMP + NADPH + 2 H(+). Catalyzes the irreversible NADPH-dependent deamination of GMP to IMP. It functions in the conversion of nucleobase, nucleoside and nucleotide derivatives of G to A nucleotides, and in maintaining the intracellular balance of A and G nucleotides. The sequence is that of GMP reductase from Streptococcus suis (strain 98HAH33).